A 438-amino-acid polypeptide reads, in one-letter code: Thymidine phosphorylase (438 aa).

This sequence belongs to the thymidine/pyrimidine-nucleoside phosphorylase family. In terms of assembly, homodimer.

The enzyme catalyses thymidine + phosphate = 2-deoxy-alpha-D-ribose 1-phosphate + thymine. It functions in the pathway pyrimidine metabolism; dTMP biosynthesis via salvage pathway; dTMP from thymine: step 1/2. In terms of biological role, the enzymes which catalyze the reversible phosphorolysis of pyrimidine nucleosides are involved in the degradation of these compounds and in their utilization as carbon and energy sources, or in the rescue of pyrimidine bases for nucleotide synthesis. This is Thymidine phosphorylase from Burkholderia cenocepacia (strain ATCC BAA-245 / DSM 16553 / LMG 16656 / NCTC 13227 / J2315 / CF5610) (Burkholderia cepacia (strain J2315)).